The primary structure comprises 489 residues: MTFRHCVAVDLGASSGRVMLARYDSKHRTLTLREIHRFVNCLQKTDGFDTWDIDSLEKDIRLGLKKVCNEGILIDSIGIDTWGVDYVLLDKQGQRVGLPVSYRDNRTTGIMPQALVQIGKSEIYRRSGIQFLPFNTIYQLRALTKQQPELTAQVAHALLMPDYFSYRLTGEMNWEYTNATTTQLVNINTDDWDDTLLAWTGAKKSWFGRPSHPGNVIGDWICPQGNRIPVVAVASHDTASAVIASPLANKHSAYLSSGTWSLMGFESKMPYTTDEALAANITNEGGAEGRYRVLKNIMGLWLLQRVLKERRITDLPALIAQTEALPACRFLINPNDDRFINPDDMRAEIQAVCRETDQPVPVSDAELARCIFDSLALLYADILHELANLRGEKFTQLHIVGGGCQNSLLNQLCADACGIRVIAGPVEASTLGNIGIQLMTLDELNNVDDFRQVVSANYDLTTYIPNPDSEIARHVAQFQPKRQTKELCA.

13 to 17 (ASSGR) provides a ligand contact to ATP. A disulfide bridge links C68 with C222. Residues G83 and 236-238 (HDT) contribute to the substrate site. D237 serves as the catalytic Proton acceptor. T259 serves as a coordination point for ATP. A substrate-binding site is contributed by N296. Position 304 (Q304) interacts with ATP. A disulfide bond links C353 and C370. G402 lines the ATP pocket. An intrachain disulfide couples C413 to C417.

The protein belongs to the rhamnulokinase family. Mg(2+) is required as a cofactor.

It carries out the reaction L-rhamnulose + ATP = L-rhamnulose 1-phosphate + ADP + H(+). It functions in the pathway carbohydrate degradation; L-rhamnose degradation; glycerone phosphate from L-rhamnose: step 2/3. Involved in the catabolism of L-rhamnose (6-deoxy-L-mannose). Catalyzes the transfer of the gamma-phosphate group from ATP to the 1-hydroxyl group of L-rhamnulose to yield L-rhamnulose 1-phosphate. The protein is Rhamnulokinase of Salmonella choleraesuis (strain SC-B67).